The chain runs to 133 residues: Large ribosomal subunit protein bL21 (133 aa).

Positions 1-22 are disordered; that stretch reads MAEKPAAKPKAAAAKAEAKDQS.

The protein belongs to the bacterial ribosomal protein bL21 family. In terms of assembly, part of the 50S ribosomal subunit. Contacts protein L20.

This protein binds to 23S rRNA in the presence of protein L20. This Prochlorococcus marinus (strain MIT 9303) protein is Large ribosomal subunit protein bL21.